Consider the following 734-residue polypeptide: MSNRTYADNLFPQQVAEQHEEQMSSGSSPKSNSPSRSISSVEAANSRIHIGWMATTLDVAENLDRHVATFCTRLGEFKYNFVVYPIGGVVRAFWTPNGSAENHPPVIDLPDVQLRNDLWESYVVGKISPWIDCDSSDPAFASLSEEHLLKELSYICYLGLQTMAIELTRISSPRTAAILKKWIWTRNSRFTVWVQLPSAIEKCKDYDAFTIEHVDLWTIWADFRKNCGNFSGVYFQVALTISSELPDELTELKLVDRWKAEPLAAFVIESGLFISGRNGEASIPSAHINLLKHLWTTDALRIVLRATTDTFKYNTSIKSEYSQALRHAVRNVNYRSRPDVGEGSNDSTHYLNVIEYKDVLQAPLQPLSENLDSGVYNTFEQDQIKYDVYGEAVVGALKDLGADGRKTVVIYLLGGGRGPIGTKILKSEREYNNTFRQGQESLKVKLYIVEKNPNAIVTLKYMNVRTWKRRVTIIESDMRSLPGIAKDRGFEQPDIIVSELLGSFGDNELSPECLDGVTGFLKPTTISIPQKYTSYVKPIMSTHIHQTIKAQSIPYLSRAIPSHGRGEPELDEDEMWIQKYPQGHVRNNMDQIYVVYLSKYIPLAETTKPVFTFEHPNFMNSSNERSDSIEFVMDRNADLMGFAGYFDLQLYKTVMLSIEPSTHTPGMVSWFPAVIPLRDQLRVGEGDRISLKIDRKVDNTGVWYEWHVEKKKTNGESVSTPIQNPNGESYYMRM.

Residues 1 to 16 (MSNRTYADNLFPQQVA) are compositionally biased toward polar residues. A disordered region spans residues 1–39 (MSNRTYADNLFPQQVAEQHEEQMSSGSSPKSNSPSRSIS). The segment covering 24–39 (SSGSSPKSNSPSRSIS) has biased composition (low complexity). The segment at 42-329 (EAANSRIHIG…EYSQALRHAV (288 aa)) is TIM barrel. The SAM-dependent MTase PRMT-type domain maps to 360 to 706 (LQAPLQPLSE…VDNTGVWYEW (347 aa)). S-adenosyl-L-methionine is bound at residue tyrosine 376. Residue phenylalanine 379 coordinates a protein. S-adenosyl-L-methionine-binding positions include 385-386 (KY), glutamate 450, and 477-478 (DM). A protein contacts are provided by glutamate 499 and glutamate 508. Catalysis depends on proton donor/acceptor residues glutamate 499 and glutamate 508. The segment at 529 to 734 (PQKYTSYVKP…PNGESYYMRM (206 aa)) is beta barrel. A dimerization region spans residues 541 to 589 (STHIHQTIKAQSIPYLSRAIPSHGRGEPELDEDEMWIQKYPQGHVRNNM).

This sequence belongs to the class I-like SAM-binding methyltransferase superfamily. Protein arginine N-methyltransferase family. As to quaternary structure, homodimer. Interacts with cep-1 (via C-terminus domain); does not methylate cep-1. Interacts with cbp-1 (via N-terminus domain and HAT domain); the interaction results in methylation of cbp-1. Component of a complex that contains cep-1 and cbp-1. May interact with pid-2, pid-4 and pid-5.

Its subcellular location is the nucleus. The enzyme catalyses L-arginyl-[protein] + 2 S-adenosyl-L-methionine = N(omega),N(omega)'-dimethyl-L-arginyl-[protein] + 2 S-adenosyl-L-homocysteine + 2 H(+). Its function is as follows. Catalyzes the symmetrical dimethylation of arginine residues in targets such as small nuclear ribonucleoproteins, histone H2A/H4 and cbp-1. Dimethylation occurs in a distributive manner where the protein is released after the addition of the first methyl group prior to rebinding for the addition of the second methyl group. Plays a role in the negative regulation of DNA damage-induced apoptosis. By methylating cbp-1, may prevent apoptosis by repressing the capacity of cbp-1 to enhance cep-1 dependent transcription activation of the programmed cell death activator egl-1. Plays a role in heat and oxidative stress resistance. This Caenorhabditis elegans protein is Protein arginine N-methyltransferase 5.